A 94-amino-acid polypeptide reads, in one-letter code: Acylphosphatase (94 aa).

Residues 8–94 (TLFIIVHGKV…GRRFKHFAQH (87 aa)) form the Acylphosphatase-like domain. Residues Arg23 and Asn41 contribute to the active site. The disordered stretch occupies residues 69–94 (PPAASVTELESRREDGGRRFKHFAQH). The span at 77 to 86 (LESRREDGGR) shows a compositional bias: basic and acidic residues.

The protein belongs to the acylphosphatase family.

It carries out the reaction an acyl phosphate + H2O = a carboxylate + phosphate + H(+). This is Acylphosphatase (acyP) from Bordetella avium (strain 197N).